A 643-amino-acid chain; its full sequence is Phosphatidylinositol-3,5-bisphosphate 3-phosphatase MTMR2 (643 aa).

2 stretches are compositionally biased toward polar residues: residues M1 to S12 and D23 to K40. The segment at M1 to A54 is disordered. Phosphoserine is present on residues S6 and S9. Residues S41–A54 are compositionally biased toward low complexity. Residue S58 is modified to Phosphoserine. In terms of domain architecture, GRAM spans N68 to G139. The 376-residue stretch at G205–Y580 folds into the Myotubularin phosphatase domain. A 1,2-diacyl-sn-glycero-3-phospho-(1D-myo-inositol-3,5-bisphosphate) is bound by residues N330, N355, and I356. 3 residues coordinate a 1,2-diacyl-sn-glycero-3-phospho-(1D-myo-inositol-3-phosphate): N330, N355, and I356. Residue C417 is the Phosphocysteine intermediate of the active site. A 1,2-diacyl-sn-glycero-3-phospho-(1D-myo-inositol-3,5-bisphosphate)-binding residues include S418, D419, G420, W421, D422, R423, R459, and R463. A 1,2-diacyl-sn-glycero-3-phospho-(1D-myo-inositol-3-phosphate)-binding residues include S418, D419, G420, W421, D422, and R423. Residue R463 participates in a 1,2-diacyl-sn-glycero-3-phospho-(1D-myo-inositol-3-phosphate) binding. A coiled-coil region spans residues I593–E627. The segment at L614–V643 is disordered.

This sequence belongs to the protein-tyrosine phosphatase family. Non-receptor class myotubularin subfamily. In terms of assembly, homodimer (via coiled-coil domain). Heterotetramer consisting of one MTMR2 dimer and one SBF2/MTMR13 dimer; specifically in peripheral nerves stabilizes SBF2/MTMR13 at the membranes and increases MTMR2 catalytic activity towards phosphatidylinositol 3,5-bisphosphate and to a lesser extent towards phosphatidylinositol 3-phosphate. Heterodimer with SBF1/MTMR5; acts as an adapter for the phosphatase MTMR2 to regulate MTMR2 catalytic activity and subcellular location. Heterodimer with MTMR12. In terms of processing, phosphorylation at Ser-58 decreases MTMR2 localization to endocytic vesicular structures.

It localises to the cytoplasm. Its subcellular location is the early endosome membrane. The protein resides in the perinuclear region. The protein localises to the cell projection. It is found in the axon. It localises to the endosome membrane. The enzyme catalyses a 1,2-diacyl-sn-glycero-3-phospho-(1D-myo-inositol-3,5-bisphosphate) + H2O = a 1,2-diacyl-sn-glycero-3-phospho-(1D-myo-inositol-5-phosphate) + phosphate. It catalyses the reaction a 1,2-diacyl-sn-glycero-3-phospho-(1D-myo-inositol-3-phosphate) + H2O = a 1,2-diacyl-sn-glycero-3-phospho-(1D-myo-inositol) + phosphate. It carries out the reaction 1,2-dioctanoyl-sn-glycero-3-phospho-(1-D-myo-inositol-3-phosphate) + H2O = 1,2-dioctanoyl-sn-glycero-3-phospho-(1D-myo-inositol) + phosphate. The catalysed reaction is 1,2-dioctanoyl-sn-glycero-3-phospho-(1D-myo-inositol-3,5-bisphosphate) + H2O = 1,2-dioctanoyl-sn-glycero-3-phospho-(1D-myo-inositol-5-phosphate) + phosphate. Functionally, lipid phosphatase that specifically dephosphorylates the D-3 position of phosphatidylinositol 3-phosphate and phosphatidylinositol 3,5-bisphosphate, generating phosphatidylinositol and phosphatidylinositol 5-phosphate. Regulates the level of these phosphoinositides critical for various biological processes including autophagy initiation and autophagosome maturation. In Bos taurus (Bovine), this protein is Phosphatidylinositol-3,5-bisphosphate 3-phosphatase MTMR2.